The chain runs to 253 residues: MRTPIIAGNWKMNKTVQEAKDFVNELPTLPDPKEVESVICAPTIQLDALVTAVKDGKAKGLKIGAQNAYFEESGAYTGETSPVALSELGVKYVVIGHSERRDYFHETDEEVNKKAHAIFNHGMTPIICVGESDEEREAGKANKIVGNQVKKAVEGLSDDQLKEVVIAYEPIWAIGTGKSSTSEDANEMCAHVRQTLADLSSQEVADATRIQYGGSVKPNNIKEYMAQSDIDGALVGGASLKVEDFVQLLEGAK.

9-11 (NWK) provides a ligand contact to substrate. The Electrophile role is filled by His97. Glu169 serves as the catalytic Proton acceptor. Substrate-binding positions include Gly175, Ser215, and 236 to 237 (GG).

Belongs to the triosephosphate isomerase family. As to quaternary structure, homodimer.

Its subcellular location is the cytoplasm. It carries out the reaction D-glyceraldehyde 3-phosphate = dihydroxyacetone phosphate. The protein operates within carbohydrate biosynthesis; gluconeogenesis. Its pathway is carbohydrate degradation; glycolysis; D-glyceraldehyde 3-phosphate from glycerone phosphate: step 1/1. In terms of biological role, involved in the gluconeogenesis. Catalyzes stereospecifically the conversion of dihydroxyacetone phosphate (DHAP) to D-glyceraldehyde-3-phosphate (G3P). The chain is Triosephosphate isomerase from Staphylococcus epidermidis (strain ATCC 35984 / DSM 28319 / BCRC 17069 / CCUG 31568 / BM 3577 / RP62A).